A 20-amino-acid polypeptide reads, in one-letter code: Pregnancy-associated glycoprotein 57 (20 aa).

It belongs to the peptidase A1 family. Glycosylated.

It localises to the secreted. This Ovis aries (Sheep) protein is Pregnancy-associated glycoprotein 57.